Consider the following 222-residue polypeptide: Ribosomal RNA small subunit methyltransferase G (222 aa).

Residues glycine 84, phenylalanine 89, 141-142 (VE), and arginine 154 each bind S-adenosyl-L-methionine.

Belongs to the methyltransferase superfamily. RNA methyltransferase RsmG family.

It is found in the cytoplasm. The catalysed reaction is guanosine(527) in 16S rRNA + S-adenosyl-L-methionine = N(7)-methylguanosine(527) in 16S rRNA + S-adenosyl-L-homocysteine. Specifically methylates the N7 position of guanine in position 527 of 16S rRNA. This is Ribosomal RNA small subunit methyltransferase G from Bradyrhizobium sp. (strain ORS 278).